The chain runs to 325 residues: GMP reductase (325 aa).

C174 acts as the Thioimidate intermediate in catalysis. Position 203 to 226 (203 to 226 (LIADGGIRTHGDIAKSIRFGASMV)) interacts with NADP(+).

This sequence belongs to the IMPDH/GMPR family. GuaC type 2 subfamily.

It carries out the reaction IMP + NH4(+) + NADP(+) = GMP + NADPH + 2 H(+). Functionally, catalyzes the irreversible NADPH-dependent deamination of GMP to IMP. It functions in the conversion of nucleobase, nucleoside and nucleotide derivatives of G to A nucleotides, and in maintaining the intracellular balance of A and G nucleotides. The polypeptide is GMP reductase (Staphylococcus aureus (strain NCTC 8325 / PS 47)).